The following is a 617-amino-acid chain: uncharacterized protein (617 aa).

A B12-binding N-terminal domain is found at 33–134 (TEDDFRGEKF…FXNATKQKGS (102 aa)). Residues Glu-84, 146–150 (GDVHD), His-149, Ser-194, Thr-198, and Ala-251 each bind methylcob(III)alamin. Positions 136-272 (NGKVVIATVK…NPEGRAALWE (137 aa)) constitute a B12-binding domain. An AdoMet activation domain is found at 288-617 (SKPLRKQLSI…MMKWLGVAMK (330 aa)). Residues Asp-337, Arg-528, and 583–584 (YF) each bind S-adenosyl-L-methionine.

Belongs to the vitamin-B12 dependent methionine synthase family.

This is an uncharacterized protein from Haemophilus influenzae (strain ATCC 51907 / DSM 11121 / KW20 / Rd).